Consider the following 537-residue polypeptide: Mitochondrial distribution and morphology protein 34 (537 aa).

An SMP-LTD domain is found at 1–195 (MAFNFNWSPL…LPAIIHRLSL (195 aa)). Disordered regions lie at residues 320–339 (YTFS…RPSL), 348–403 (GLSL…IMPH), 421–493 (GRSP…DTSS), and 516–537 (KNGN…YEAR). A compositionally biased stretch (basic residues) spans 355–371 (RHSKAGRKKKTRVVNLR). Acidic residues predominate over residues 378 to 391 (ANSEEEEDTPETDS). The segment covering 425 to 441 (DLQQQPRRPSFRAQATN) has biased composition (polar residues).

Belongs to the MDM34 family. As to quaternary structure, component of the ER-mitochondria encounter structure (ERMES) or MDM complex, composed of MMM1, MDM10, MDM12 and MDM34.

The protein resides in the mitochondrion outer membrane. In terms of biological role, component of the ERMES/MDM complex, which serves as a molecular tether to connect the endoplasmic reticulum (ER) and mitochondria. Components of this complex are involved in the control of mitochondrial shape and protein biogenesis, and function in nonvesicular lipid trafficking between the ER and mitochondria. MDM34 is required for the interaction of the ER-resident membrane protein MMM1 and the outer mitochondrial membrane-resident beta-barrel protein MDM10. This chain is Mitochondrial distribution and morphology protein 34, found in Chaetomium globosum (strain ATCC 6205 / CBS 148.51 / DSM 1962 / NBRC 6347 / NRRL 1970) (Soil fungus).